We begin with the raw amino-acid sequence, 487 residues long: N-succinylglutamate 5-semialdehyde dehydrogenase (487 aa).

221 to 226 provides a ligand contact to NAD(+); the sequence is GSSDTG. Catalysis depends on residues glutamate 244 and cysteine 278.

This sequence belongs to the aldehyde dehydrogenase family. AstD subfamily.

The enzyme catalyses N-succinyl-L-glutamate 5-semialdehyde + NAD(+) + H2O = N-succinyl-L-glutamate + NADH + 2 H(+). The protein operates within amino-acid degradation; L-arginine degradation via AST pathway; L-glutamate and succinate from L-arginine: step 4/5. Functionally, catalyzes the NAD-dependent reduction of succinylglutamate semialdehyde into succinylglutamate. This is N-succinylglutamate 5-semialdehyde dehydrogenase from Burkholderia cenocepacia (strain ATCC BAA-245 / DSM 16553 / LMG 16656 / NCTC 13227 / J2315 / CF5610) (Burkholderia cepacia (strain J2315)).